Consider the following 101-residue polypeptide: MANITVTFTITEFCLHTGVTEEELNEIVGLGVIEPYEDDNADWQFDDRAASVVQRALRLREELALDWPGIAVALTLLEENSRLREENRLLLQRLSRFISHP.

The protein belongs to the CbpM family.

Functionally, interacts with CbpA and inhibits both the DnaJ-like co-chaperone activity and the DNA binding activity of CbpA. Together with CbpA, modulates the activity of the DnaK chaperone system. Does not inhibit the co-chaperone activity of DnaJ. The sequence is that of Chaperone modulatory protein CbpM from Salmonella agona (strain SL483).